We begin with the raw amino-acid sequence, 638 residues long: Zinc finger and BTB domain-containing protein 22 (638 aa).

A BTB domain is found at cysteine 57–alanine 121. 4 disordered regions span residues cysteine 171–glutamine 223, serine 229–valine 248, aspartate 335–glutamate 354, and glutamate 367–valine 451. Over residues serine 189 to phenylalanine 210 the composition is skewed to polar residues. Serine 203 carries the post-translational modification Phosphoserine. The C2H2-type 1; atypical zinc-finger motif lies at phenylalanine 483–histidine 504. C2H2-type zinc fingers lie at residues phenylalanine 510–histidine 532 and tyrosine 538–histidine 559. The segment at histidine 564–histidine 638 is disordered.

The protein belongs to the krueppel C2H2-type zinc-finger protein family.

Its subcellular location is the nucleus. Functionally, may be involved in transcriptional regulation. In Mus musculus (Mouse), this protein is Zinc finger and BTB domain-containing protein 22 (Zbtb22).